The primary structure comprises 257 residues: 3-deoxy-manno-octulosonate cytidylyltransferase (257 aa).

It belongs to the KdsB family.

The protein resides in the cytoplasm. It carries out the reaction 3-deoxy-alpha-D-manno-oct-2-ulosonate + CTP = CMP-3-deoxy-beta-D-manno-octulosonate + diphosphate. It functions in the pathway nucleotide-sugar biosynthesis; CMP-3-deoxy-D-manno-octulosonate biosynthesis; CMP-3-deoxy-D-manno-octulosonate from 3-deoxy-D-manno-octulosonate and CTP: step 1/1. It participates in bacterial outer membrane biogenesis; lipopolysaccharide biosynthesis. Functionally, activates KDO (a required 8-carbon sugar) for incorporation into bacterial lipopolysaccharide in Gram-negative bacteria. This Methylobacillus flagellatus (strain ATCC 51484 / DSM 6875 / VKM B-1610 / KT) protein is 3-deoxy-manno-octulosonate cytidylyltransferase.